We begin with the raw amino-acid sequence, 64 residues long: Prokaryotic ubiquitin-like protein UBact (64 aa).

Composition is skewed to basic and acidic residues over residues 1-12 (MSDLFRMEERRQ) and 33-64 (PDVKRPDTSDLLRRMKRVDPDAARRYRQRSGE). The interval 1 to 64 (MSDLFRMEER…ARRYRQRSGE (64 aa)) is disordered. E64 is covalently cross-linked (Isoglutamyl lysine isopeptide (Glu-Lys) (interchain with K-? in acceptor proteins)).

It belongs to the ubiquitin-like protein UBact family.

Its function is as follows. May function as a protein modifier covalently attached to lysine residues of substrate proteins. This may serve to target the modified proteins for degradation by proteasomes. The polypeptide is Prokaryotic ubiquitin-like protein UBact (Chthonomonas calidirosea (strain DSM 23976 / ICMP 18418 / T49)).